The chain runs to 1507 residues: Protein similar (1507 aa).

The disordered stretch occupies residues 1 to 85; the sequence is MVSLIDTIEA…KSRDAARCRR (85 aa). A compositionally biased stretch (low complexity) spans 26–49; sequence SASSSSCSSSFSSSPPSSSVGSPS. The segment covering 72–85 has biased composition (basic and acidic residues); that stretch reads KRKEKSRDAARCRR. Residues 72 to 125 enclose the bHLH domain; the sequence is KRKEKSRDAARCRRSKETEIFMELSAALPLKTDDVNQLDKASVMRITIAFLKIR. 2 consecutive PAS domains span residues 167–240 and 307–377; these read NGAE…LAQK and PHPS…LSKG. In terms of domain architecture, PAC spans 381–422; sequence TSRYRFLGKYGGYCWILSQATIVYDKLKPQSVVCVNYVISNL. Disordered regions lie at residues 433–459, 541–588, 706–832, and 900–951; these read QQTA…KAAD, HSPG…PPPT, TCST…CSPN, and YAGN…QAAV. Residues 439 to 459 show a composition bias toward basic and acidic residues; the sequence is EQKEQHHQAAETEKEPEKAAD. Residues 548 to 559 show a composition bias toward polar residues; that stretch reads ITAQLLSGSSSG. Residues 578 to 588 are compositionally biased toward pro residues; it reads SPAPPLTPPPT. The tract at residues 692–863 is ODD; that stretch reads TCLLPEDINS…IDDDMPLLTE (172 aa). Polar residues predominate over residues 706-717; the sequence is TCSTTASGQHYQ. Low complexity-rich tracts occupy residues 718 to 745 and 754 to 777; these read SPSS…LSPL and SNPS…QQQH. A compositionally biased stretch (polar residues) spans 803 to 818; it reads DTSCSQHLHSPSITSK. Low complexity-rich tracts occupy residues 823–832, 907–918, and 926–951; these read SSLPSLCSPN, QQQQQQPQLQQQ, and SSPA…QAAV. Positions 880 to 908 form a coiled coil; that stretch reads KEIDAIQQQLQQLQQQHHQQYAGNTGYQQ. Coiled coils occupy residues 982–1054 and 1110–1162; these read AEEC…YDVQ and QLLQ…QLQQ. Disordered stretches follow at residues 1204–1228, 1251–1287, and 1356–1460; these read PQQQ…VESK, KDPA…QSNS, and FGGS…KTSI. Positions 1413 to 1423 are enriched in polar residues; sequence SSTSNSTNQAE.

Efficient DNA binding requires dimerization with another bHLH protein. Interacts with Vhl. Ubiquitously expressed in the embryo.

It localises to the cytoplasm. It is found in the nucleus. In terms of biological role, functions as a transcriptional regulator of the adaptive response to hypoxia. Binds to core DNA sequence 5'-[AG]CGTG-3' within the hypoxia response element (HRE) of target gene promoters. The protein is Protein similar (sima) of Drosophila melanogaster (Fruit fly).